Consider the following 207-residue polypeptide: NAD--protein ADP-ribosyltransferase modB (207 aa).

Arg73 contributes to the NAD(+) binding site. The active site involves Glu173.

It belongs to the Tevenvirinae NAD--protein ADP-ribosyltransferase modA family.

Its subcellular location is the virion. The enzyme catalyses L-arginyl-[protein] + NAD(+) = N(omega)-(ADP-D-ribosyl)-L-arginyl-[protein] + nicotinamide + H(+). Functionally, ADP-ribosyltransferase that regulates transcription by ADP-ribosylation of host ribosomal protein S1. Additional identified targets include proteins involved in either translation or cellular metabolism such as elongation factor-Tu or trigger factor. Also reprograms the host's gene-expression system by RNAylating host ribosomal protein S1. ModB can attach NAD-capped RNAs to target proteins post-transcriptionally resulting in covalent RNA-protein conjugates. The polypeptide is NAD--protein ADP-ribosyltransferase modB (Enterobacteria phage T4 (Bacteriophage T4)).